A 219-amino-acid chain; its full sequence is Deoxyribose-phosphate aldolase (219 aa).

Residue D89 is the Proton donor/acceptor of the active site. The active-site Schiff-base intermediate with acetaldehyde is K151. K180 (proton donor/acceptor) is an active-site residue.

It belongs to the DeoC/FbaB aldolase family. DeoC type 1 subfamily.

It is found in the cytoplasm. The enzyme catalyses 2-deoxy-D-ribose 5-phosphate = D-glyceraldehyde 3-phosphate + acetaldehyde. The protein operates within carbohydrate degradation; 2-deoxy-D-ribose 1-phosphate degradation; D-glyceraldehyde 3-phosphate and acetaldehyde from 2-deoxy-alpha-D-ribose 1-phosphate: step 2/2. Catalyzes a reversible aldol reaction between acetaldehyde and D-glyceraldehyde 3-phosphate to generate 2-deoxy-D-ribose 5-phosphate. This Clostridioides difficile (strain 630) (Peptoclostridium difficile) protein is Deoxyribose-phosphate aldolase.